Consider the following 1577-residue polypeptide: MAP kinase-activating death domain protein (1577 aa).

In terms of domain architecture, uDENN spans 13 to 267 (YLVIVGARHP…VPVSGQKRVD (255 aa)). Residues 106 to 121 (KEKVEGGAGPRGKEGA) are compositionally biased toward basic and acidic residues. The segment at 106 to 166 (KEKVEGGAGP…WGKRRAKAGS (61 aa)) is disordered. Low complexity predominate over residues 123–140 (TSGASEEAATGSSESGST). Residues 141 to 156 (LQPPSADSTPDINQSP) show a composition bias toward polar residues. Ser155 is modified (phosphoserine). Residues 288 to 428 (RFTLVDFPLH…ESLELKKHLK (141 aa)) form the cDENN domain. The region spanning 430–564 (ALASMSLNTQ…LNPSNYAFQR (135 aa)) is the dDENN domain. Disordered stretches follow at residues 604–635 (LSVP…SSYS) and 676–840 (QPQK…NSTE). Residues 614–629 (SDPTEDSGSDSQDYDD) are compositionally biased toward acidic residues. Phosphoserine is present on residues Ser688 and Ser691. Polar residues predominate over residues 688-698 (SENSQENPPLR). Low complexity predominate over residues 699–715 (SSSSTTASSSPSTVVHS). A compositionally biased stretch (polar residues) spans 793 to 803 (PRFSQHVSGSR). A phosphoserine mark is found at Ser812, Ser817, and Ser819. The span at 826–839 (RASSPNSTVSNNST) shows a compositional bias: low complexity. Ser857, Ser861, Ser915, Ser920, Ser929, and Ser1058 each carry phosphoserine. 3 disordered regions span residues 912 to 940 (QKSS…SSEN), 1050 to 1109 (KEPD…DTRS), and 1127 to 1272 (EVKK…RSSE). Low complexity predominate over residues 928 to 938 (SSPQGRSSNSS). 2 positions are modified to phosphothreonine: Thr1060 and Thr1065. Ser1109 carries the post-translational modification Phosphoserine. The span at 1127–1141 (EVKKQKALEKQRPEG) shows a compositional bias: basic and acidic residues. Residues 1157 to 1172 (QMSADSGVSLTSASQR) are compositionally biased toward polar residues. The span at 1189 to 1203 (SSSQDSEVSTVSNSS) shows a compositional bias: low complexity. A compositionally biased stretch (polar residues) spans 1232–1248 (SRATLSDSEIETNSATS). Thr1235 carries the phosphothreonine modification. Phosphoserine is present on residues Ser1237 and Ser1266. The Death domain maps to 1336-1411 (GMDQGPQEMI…GLVYSQQVNE (76 aa)).

It belongs to the MADD family. As to quaternary structure, interacts (via death domain) with TNFRSF1A (via death domain). Interacts with PIDD1. Interacts with YWHAZ. Interacts (via death domain) with KIF1B; links the motor KIF1B to Rab3-carrying vesicles in anterograde synaptic vesicle transport. Interacts with KIF1A. Interacts (via uDENN domain) with RAB3A, RAB3B, RAB3C and RAB3D; the GTP-bound form of the Rab proteins is preferred for interaction. As to expression, expressed in the brain.

It is found in the cell membrane. The protein resides in the cytoplasm. The protein localises to the cell projection. Its subcellular location is the axon. Its function is as follows. Guanyl-nucleotide exchange factor that regulates small GTPases of the Rab family. Converts GDP-bound inactive form of RAB27A and RAB27B to the GTP-bound active forms. Converts GDP-bound inactive form of RAB3A, RAB3C and RAB3D to the GTP-bound active forms, GTPases involved in synaptic vesicle exocytosis and vesicle secretion. Plays a role in synaptic vesicle formation and in vesicle trafficking at the neuromuscular junction. Involved in up-regulating a post-docking step of synaptic exocytosis in central synapses. Probably by binding to the motor proteins KIF1B and KIF1A, mediates motor-dependent transport of GTP-RAB3A-positive vesicles to the presynaptic nerve terminals. Plays a role in TNFA-mediated activation of the MAPK pathway, including ERK1/2. May link TNFRSF1A with MAP kinase activation. May be involved in the regulation of TNFA-induced apoptosis. The sequence is that of MAP kinase-activating death domain protein from Mus musculus (Mouse).